We begin with the raw amino-acid sequence, 370 residues long: Nematocyst expressed protein 4 (370 aa).

The signal sequence occupies residues 1 to 19 (MAWTLVLLVLLGTSSCLDA). Positions 34-55 (SGSGSGEEGSSGSGSAPEPVRD) are disordered. Residues 36 to 45 (SGSGEEGSSG) are compositionally biased toward gly residues. ShKT domains lie at 70–102 (CLDK…CRFC), 113–149 (CTDA…CKLC), and 155–190 (GKKF…CEVH). 8 cysteine pairs are disulfide-bonded: Cys-70–Cys-102, Cys-77–Cys-95, Cys-84–Cys-99, Cys-113–Cys-149, Cys-121–Cys-142, Cys-131–Cys-146, Cys-164–Cys-183, and Cys-173–Cys-187. Residues 306-340 (PYPPPPPPYPEQVPPPPPPPPPPPPPPPYPYPYPY) are compositionally biased toward pro residues. Residues 306 to 370 (PYPPPPPPYP…HHKENHSKKS (65 aa)) are disordered. A compositionally biased stretch (basic residues) spans 349–370 (HKSKKHAKHHEKHHKENHSKKS).

Belongs to the NEP3 family. Nematocytes. In late planulae, transcripts are found throughout the ectoderm in nematocytes, with high concentration of expressing cells in the oral pole. In primary polyps, is expressed in nematocytes in the body wall and physa ectoderm and in the upper and lower pharynx.

Its subcellular location is the nematocyst. The protein localises to the secreted. In Nematostella vectensis (Starlet sea anemone), this protein is Nematocyst expressed protein 4.